A 68-amino-acid polypeptide reads, in one-letter code: MIFPIRCFSCGNVISEVYDEYKTRLSNVESPEEILNDLGVTKYCCRRMFASHRLENGKELFDDIVEYR.

The Zn(2+) site is built by C7, C10, C44, and C45.

The protein belongs to the archaeal Rpo10/eukaryotic RPB10 RNA polymerase subunit family. Part of the RNA polymerase complex. Requires Zn(2+) as cofactor.

The protein resides in the cytoplasm. It catalyses the reaction RNA(n) + a ribonucleoside 5'-triphosphate = RNA(n+1) + diphosphate. Its function is as follows. DNA-dependent RNA polymerase (RNAP) catalyzes the transcription of DNA into RNA using the four ribonucleoside triphosphates as substrates. The polypeptide is DNA-directed RNA polymerase subunit Rpo10 (Methanococcus vannielii (strain ATCC 35089 / DSM 1224 / JCM 13029 / OCM 148 / SB)).